The primary structure comprises 264 residues: uncharacterized protein (264 aa).

An N-terminal signal peptide occupies residues 1–22; the sequence is MIHSKKLTLGICLVLLIILIGG. A lipid anchor (N-palmitoyl cysteine) is attached at Cys23. Cys23 is lipidated: S-diacylglycerol cysteine.

Belongs to the staphylococcal tandem lipoprotein family.

Its subcellular location is the cell membrane. This is an uncharacterized protein from Staphylococcus aureus (strain N315).